A 449-amino-acid chain; its full sequence is CCA-adding enzyme (449 aa).

Residues S57 and R60 each contribute to the ATP site. CTP is bound by residues S57 and R60. Residues D69, D71, and D124 each coordinate Mg(2+). 3 residues coordinate ATP: H147, K167, and Y176. Residues H147, K167, and Y176 each contribute to the CTP site.

This sequence belongs to the tRNA nucleotidyltransferase/poly(A) polymerase family. Archaeal CCA-adding enzyme subfamily. Homodimer. Mg(2+) is required as a cofactor.

It carries out the reaction a tRNA precursor + 2 CTP + ATP = a tRNA with a 3' CCA end + 3 diphosphate. The catalysed reaction is a tRNA with a 3' CCA end + 2 CTP + ATP = a tRNA with a 3' CCACCA end + 3 diphosphate. Its function is as follows. Catalyzes the addition and repair of the essential 3'-terminal CCA sequence in tRNAs without using a nucleic acid template. Adds these three nucleotides in the order of C, C, and A to the tRNA nucleotide-73, using CTP and ATP as substrates and producing inorganic pyrophosphate. tRNA 3'-terminal CCA addition is required both for tRNA processing and repair. Also involved in tRNA surveillance by mediating tandem CCA addition to generate a CCACCA at the 3' terminus of unstable tRNAs. While stable tRNAs receive only 3'-terminal CCA, unstable tRNAs are marked with CCACCA and rapidly degraded. The sequence is that of CCA-adding enzyme from Methanocaldococcus jannaschii (strain ATCC 43067 / DSM 2661 / JAL-1 / JCM 10045 / NBRC 100440) (Methanococcus jannaschii).